Reading from the N-terminus, the 284-residue chain is Tropomyosin (284 aa).

Residues 1-284 (MDAIKKKMQA…DMTFTELIGN (284 aa)) are a coiled coil.

Belongs to the tropomyosin family. Homodimer.

In terms of biological role, tropomyosin, in association with the troponin complex, plays a central role in the calcium dependent regulation of muscle contraction. This is Tropomyosin from Periplaneta fuliginosa (Smokybrown cockroach).